The following is a 201-amino-acid chain: 3-isopropylmalate dehydratase small subunit (201 aa).

It belongs to the LeuD family. LeuD type 1 subfamily. In terms of assembly, heterodimer of LeuC and LeuD.

It catalyses the reaction (2R,3S)-3-isopropylmalate = (2S)-2-isopropylmalate. The protein operates within amino-acid biosynthesis; L-leucine biosynthesis; L-leucine from 3-methyl-2-oxobutanoate: step 2/4. Functionally, catalyzes the isomerization between 2-isopropylmalate and 3-isopropylmalate, via the formation of 2-isopropylmaleate. In Afipia carboxidovorans (strain ATCC 49405 / DSM 1227 / KCTC 32145 / OM5) (Oligotropha carboxidovorans), this protein is 3-isopropylmalate dehydratase small subunit.